A 447-amino-acid chain; its full sequence is Phosphoglucosamine mutase (447 aa).

S103 acts as the Phosphoserine intermediate in catalysis. Mg(2+) is bound by residues S103, D242, D244, and D246. Position 103 is a phosphoserine (S103).

Belongs to the phosphohexose mutase family. The cofactor is Mg(2+). Post-translationally, activated by phosphorylation.

It catalyses the reaction alpha-D-glucosamine 1-phosphate = D-glucosamine 6-phosphate. Its function is as follows. Catalyzes the conversion of glucosamine-6-phosphate to glucosamine-1-phosphate. The polypeptide is Phosphoglucosamine mutase (Dinoroseobacter shibae (strain DSM 16493 / NCIMB 14021 / DFL 12)).